We begin with the raw amino-acid sequence, 271 residues long: Hachiman protein HamA (271 aa).

Component of antiviral defense system Hachiman, composed of HamA and HamB. Expression of Hachiman in B.subtilis (strain BEST7003) confers resistance to phages phi105, phi29, phi3T, rho14, SBSphiJ, SpBeta and SPR. In Bacillus cereus, this protein is Hachiman protein HamA.